The chain runs to 242 residues: Ribosomal RNA small subunit methyltransferase G (242 aa).

S-adenosyl-L-methionine is bound by residues Gly79, Val130 to Glu131, and Gln149.

This sequence belongs to the methyltransferase superfamily. RNA methyltransferase RsmG family.

The protein localises to the cytoplasm. Specifically methylates the N7 position of a guanine in 16S rRNA. The polypeptide is Ribosomal RNA small subunit methyltransferase G (Mycoplasmoides gallisepticum (strain R(low / passage 15 / clone 2)) (Mycoplasma gallisepticum)).